The primary structure comprises 385 residues: Putative nickel insertion protein (385 aa).

It belongs to the LarC family.

This chain is Putative nickel insertion protein, found in Geobacter sp. (strain M21).